Consider the following 213-residue polypeptide: Probable transaldolase (213 aa).

Lys83 functions as the Schiff-base intermediate with substrate in the catalytic mechanism.

It belongs to the transaldolase family. Type 3B subfamily.

It localises to the cytoplasm. It catalyses the reaction D-sedoheptulose 7-phosphate + D-glyceraldehyde 3-phosphate = D-erythrose 4-phosphate + beta-D-fructose 6-phosphate. Its pathway is carbohydrate degradation; pentose phosphate pathway; D-glyceraldehyde 3-phosphate and beta-D-fructose 6-phosphate from D-ribose 5-phosphate and D-xylulose 5-phosphate (non-oxidative stage): step 2/3. Functionally, transaldolase is important for the balance of metabolites in the pentose-phosphate pathway. This is Probable transaldolase from Geobacillus thermodenitrificans (strain NG80-2).